A 393-amino-acid chain; its full sequence is L-rhamnonate dehydratase (393 aa).

2 residues coordinate substrate: His-22 and Arg-48. 3 residues coordinate Mg(2+): Asp-214, Glu-241, and Glu-269. His-319 serves as the catalytic Proton acceptor. Residue Glu-339 coordinates substrate.

The protein belongs to the mandelate racemase/muconate lactonizing enzyme family. RhamD subfamily. As to quaternary structure, homooctamer; tetramer of dimers. Requires Mg(2+) as cofactor.

It catalyses the reaction L-rhamnonate = 2-dehydro-3-deoxy-L-rhamnonate + H2O. In terms of biological role, catalyzes the dehydration of L-rhamnonate to 2-keto-3-deoxy-L-rhamnonate (KDR). The polypeptide is L-rhamnonate dehydratase (Azorhizobium caulinodans (strain ATCC 43989 / DSM 5975 / JCM 20966 / LMG 6465 / NBRC 14845 / NCIMB 13405 / ORS 571)).